Reading from the N-terminus, the 338-residue chain is MMNILVTGGSGFIGSALIRYIINHTQDFVINIDKLTYAANQSALREVENNPRYVFEKVDICDLNVIENIFEKYQPDAVMHLAAESHVDRSISGAADFVQTNIVGTYTLLEVAKNYWHTLDEAKKTTFRFHHISTDEVYGDLSLSEPAFTEQSPYHPSSPYSASKAASNHLVQAWHRTYGLPVIITNSSNNYGAYQHAEKLIPLMISNAVMGKPLPIYGDGQQIRDWLFVEDHVQASYLVLTKGRVGENYNIGGNCEKTNLEVVKRICQLLEELAPSKPNHIKYYEDLMTFVKDRPGHDVRYSLDCSKIHAELGWQPQITFEQGLRQTVKWYLFNSSSS.

NAD(+) contacts are provided by residues 12–13, 33–36, 59–60, 81–85, and Thr-100; these read FI, DKLT, DI, and LAAES. Ser-85 lines the substrate pocket. Thr-134 contacts substrate. Asp-135 (proton donor) is an active-site residue. Active-site proton acceptor residues include Glu-136 and Tyr-160. Position 160 to 164 (160 to 164) interacts with NAD(+); that stretch reads YSASK. Asn-189 contacts substrate. An NAD(+)-binding site is contributed by Asn-190. Substrate contacts are provided by residues 199–200, 215–217, Arg-224, Asn-259, and 293–297; these read KL, PIY, and DRPGH.

Belongs to the NAD(P)-dependent epimerase/dehydratase family. dTDP-glucose dehydratase subfamily. In terms of assembly, homodimer. NAD(+) serves as cofactor.

It catalyses the reaction dTDP-alpha-D-glucose = dTDP-4-dehydro-6-deoxy-alpha-D-glucose + H2O. It functions in the pathway carbohydrate biosynthesis; dTDP-L-rhamnose biosynthesis. The protein operates within bacterial outer membrane biogenesis; LPS O-antigen biosynthesis. In terms of biological role, catalyzes the dehydration of dTDP-D-glucose to form dTDP-6-deoxy-D-xylo-4-hexulose via a three-step process involving oxidation, dehydration and reduction. This Haemophilus influenzae (strain ATCC 51907 / DSM 11121 / KW20 / Rd) protein is dTDP-glucose 4,6-dehydratase (rffG).